A 227-amino-acid polypeptide reads, in one-letter code: PKHD-type hydroxylase BPSS1206 (227 aa).

In terms of domain architecture, Fe2OG dioxygenase spans 78-178; that stretch reads KVFPPLFNRY…RVASFFWIQS (101 aa). Residues H96, D98, and H159 each coordinate Fe cation. R169 provides a ligand contact to 2-oxoglutarate.

It depends on Fe(2+) as a cofactor. L-ascorbate serves as cofactor.

The protein is PKHD-type hydroxylase BPSS1206 of Burkholderia pseudomallei (strain K96243).